The chain runs to 173 residues: Large ribosomal subunit protein uL16 (173 aa).

The protein belongs to the universal ribosomal protein uL16 family.

This is Large ribosomal subunit protein uL16 from Methanococcus maripaludis (strain C6 / ATCC BAA-1332).